We begin with the raw amino-acid sequence, 587 residues long: Protein NRT1/ PTR FAMILY 2.9 (587 aa).

Transmembrane regions (helical) follow at residues 35–55 (FEKLGIVGSSSNLVIYLTTVF), 65–85 (VVNIYGGTSNFGTIVAAFLCD), 94–114 (LSFAMIACFLGSVAMDLTAVI), 135–155 (IGQIMFLAGAMVLLVIGAGGI), 181–201 (FFNWYFFTFTFAQMVSLTLIV), 209–229 (WSIGLAIPAILMLLGCIIFFA), 325–345 (CVIRVLPVWLSAALFYLAYIQ), 368–388 (IPAGSYTVFLMLGMTIFIPIY), 412–432 (VGAGLFLCITSMMVSAIVEQY), 457–477 (GMWLIPQLVLMGIADALAGVG), 493–513 (FAGSLYYCGIGLASYLSTFLL), and 540–560 (YFYFLVAGMMTLNLAYFLLVS).

It belongs to the major facilitator superfamily. Proton-dependent oligopeptide transporter (POT/PTR) (TC 2.A.17) family. In terms of tissue distribution, expressed in roots, stems and major veins of the leaves. Detected in the companion cells of the root phloem.

It is found in the cell membrane. Functionally, low-affinity nitrate transporter facilitating nitrate loading into root phloem. Not involved in dipeptides transport, but has a weak glucosinolate transport activity. This Arabidopsis thaliana (Mouse-ear cress) protein is Protein NRT1/ PTR FAMILY 2.9 (NPF2.9).